The primary structure comprises 188 residues: MDQLRQSLLEAPIIEKGDYEYFVHPVSDGVPVLRPELLREIVIKIIRKVEVDNVDKIVTPAAMGIHISTAVSLMTDIPLVVIRKRQYGLEGEVSLSQQTGYAENEMYINDVRDGERVLVLDDVLSTGGTMRAVLDALDQIGAEVVDTVAVIKKAGPNELDESDHDVKTLINVRVTDGTVVIVDSNGDG.

The protein belongs to the purine/pyrimidine phosphoribosyltransferase family. Archaeal HPRT subfamily.

May catalyze a purine salvage reaction, the substrate is unknown. This chain is HGPRTase-like protein 1, found in Haloquadratum walsbyi (strain DSM 16854 / JCM 12705 / C23).